The chain runs to 252 residues: 5-oxoprolinase subunit A (252 aa).

Belongs to the LamB/PxpA family. In terms of assembly, forms a complex composed of PxpA, PxpB and PxpC.

The enzyme catalyses 5-oxo-L-proline + ATP + 2 H2O = L-glutamate + ADP + phosphate + H(+). Catalyzes the cleavage of 5-oxoproline to form L-glutamate coupled to the hydrolysis of ATP to ADP and inorganic phosphate. This chain is 5-oxoprolinase subunit A, found in Corynebacterium glutamicum (strain ATCC 13032 / DSM 20300 / JCM 1318 / BCRC 11384 / CCUG 27702 / LMG 3730 / NBRC 12168 / NCIMB 10025 / NRRL B-2784 / 534).